A 91-amino-acid chain; its full sequence is Small membrane A-kinase anchor protein (91 aa).

A lipid anchor (N-myristoyl glycine) is attached at Gly2.

It belongs to the small membrane AKAP family. May be palmitoylated at Cys-3.

It localises to the cell membrane. Its function is as follows. Binds to type I regulatory subunits of protein kinase A and may anchor/target them to the plasma membrane. This Xenopus laevis (African clawed frog) protein is Small membrane A-kinase anchor protein.